A 472-amino-acid polypeptide reads, in one-letter code: Excisase A (472 aa).

The region spanning 244–429 is the Tyr recombinase domain; the sequence is EILSGITKFE…FSLDMRKLAI (186 aa). Catalysis depends on residues arginine 287, lysine 317, arginine 384, and histidine 407. Tyrosine 416 (O-(3'-phospho-DNA)-tyrosine intermediate) is an active-site residue.

The protein belongs to the XisA/XisC recombinase family.

Functionally, essential for DNA excision. Site specific recombinase necessary for the excision of the 11 kb nifD element during heterocyst differentiation. The chain is Excisase A (xisA) from Nostoc sp. (strain PCC 7120 / SAG 25.82 / UTEX 2576).